Here is an 80-residue protein sequence, read N- to C-terminus: MGKKKRKQEHEKERGILLEGEVVEALPNGMFRVKLETGQEVLAHIAGKLRVNFIRILPGDKVKVELSPYDLTRGRIVYRL.

Residues 6–80 (RKQEHEKERG…LTRGRIVYRL (75 aa)) enclose the S1-like domain.

It belongs to the IF-1 family. As to quaternary structure, component of the 30S ribosomal translation pre-initiation complex which assembles on the 30S ribosome in the order IF-2 and IF-3, IF-1 and N-formylmethionyl-tRNA(fMet); mRNA recruitment can occur at any time during PIC assembly.

The protein resides in the cytoplasm. Its function is as follows. One of the essential components for the initiation of protein synthesis. Stabilizes the binding of IF-2 and IF-3 on the 30S subunit to which N-formylmethionyl-tRNA(fMet) subsequently binds. Helps modulate mRNA selection, yielding the 30S pre-initiation complex (PIC). Upon addition of the 50S ribosomal subunit IF-1, IF-2 and IF-3 are released leaving the mature 70S translation initiation complex. The protein is Translation initiation factor IF-1 of Aquifex aeolicus (strain VF5).